Here is a 264-residue protein sequence, read N- to C-terminus: 3-methyl-2-oxobutanoate hydroxymethyltransferase (264 aa).

Mg(2+)-binding residues include Asp45 and Asp84. 3-methyl-2-oxobutanoate-binding positions include 45-46, Asp84, and Lys112; that span reads DS. Position 114 (Glu114) interacts with Mg(2+). Glu181 serves as the catalytic Proton acceptor.

This sequence belongs to the PanB family. As to quaternary structure, homodecamer; pentamer of dimers. It depends on Mg(2+) as a cofactor.

The protein localises to the cytoplasm. The catalysed reaction is 3-methyl-2-oxobutanoate + (6R)-5,10-methylene-5,6,7,8-tetrahydrofolate + H2O = 2-dehydropantoate + (6S)-5,6,7,8-tetrahydrofolate. It participates in cofactor biosynthesis; (R)-pantothenate biosynthesis; (R)-pantoate from 3-methyl-2-oxobutanoate: step 1/2. Catalyzes the reversible reaction in which hydroxymethyl group from 5,10-methylenetetrahydrofolate is transferred onto alpha-ketoisovalerate to form ketopantoate. This is 3-methyl-2-oxobutanoate hydroxymethyltransferase from Pseudoalteromonas translucida (strain TAC 125).